A 301-amino-acid chain; its full sequence is MKIAILSRNAKLYSTRRLIEAAEERGHEVRVIDALRCYMNISSNHPQVHYKGEVLDGFDAIIPRIGASITFYGTAVLRQFEMMGVYPLNESVAISRSRDKLRSLQLLSRRGVGLPVTGFAHSPDDVNDLLETVGGAPVVIKLLEGTQGVGVVLADTHSAAESVIQAFNGLKANILVQEFIKEARGADLRCFVIGGKVVASMKRQAKDGEFRSNLHQGGSASLVRITPEERATAVRAAKIMGLNVCGVDLLRSNHGPVVMEVNSSPGIEGIETATQKDIASQIIAFIEKNAKPHNTKTRGKG.

The region spanning 104 to 287 is the ATP-grasp domain; that stretch reads LQLLSRRGVG…IASQIIAFIE (184 aa). ATP-binding positions include K141, 178–179, D187, and 211–213; these read EF and RSN. 3 residues coordinate Mg(2+): D248, E260, and N262. Residues D248, E260, and N262 each coordinate Mn(2+).

It belongs to the RimK family. It depends on Mg(2+) as a cofactor. Mn(2+) is required as a cofactor.

This is Probable alpha-L-glutamate ligase from Hydrogenovibrio crunogenus (strain DSM 25203 / XCL-2) (Thiomicrospira crunogena).